Here is a 280-residue protein sequence, read N- to C-terminus: Large ribosomal subunit protein uL2 (280 aa).

Disordered regions lie at residues 33-55 and 224-266; these read LTEGLTKSGGRNNTGRITSRRRG and AMNP…KASQ. Over residues 256–266 the composition is skewed to basic residues; it reads TRTRNKNKASQ.

It belongs to the universal ribosomal protein uL2 family. In terms of assembly, part of the 50S ribosomal subunit. Forms a bridge to the 30S subunit in the 70S ribosome.

Its function is as follows. One of the primary rRNA binding proteins. Required for association of the 30S and 50S subunits to form the 70S ribosome, for tRNA binding and peptide bond formation. It has been suggested to have peptidyltransferase activity; this is somewhat controversial. Makes several contacts with the 16S rRNA in the 70S ribosome. In Ruegeria pomeroyi (strain ATCC 700808 / DSM 15171 / DSS-3) (Silicibacter pomeroyi), this protein is Large ribosomal subunit protein uL2.